A 498-amino-acid chain; its full sequence is ATP synthase subunit beta, chloroplastic (498 aa).

Residue 172 to 179 (GGAGVGKT) participates in ATP binding.

It belongs to the ATPase alpha/beta chains family. F-type ATPases have 2 components, CF(1) - the catalytic core - and CF(0) - the membrane proton channel. CF(1) has five subunits: alpha(3), beta(3), gamma(1), delta(1), epsilon(1). CF(0) has four main subunits: a(1), b(1), b'(1) and c(9-12).

It is found in the plastid. Its subcellular location is the chloroplast thylakoid membrane. The enzyme catalyses ATP + H2O + 4 H(+)(in) = ADP + phosphate + 5 H(+)(out). Functionally, produces ATP from ADP in the presence of a proton gradient across the membrane. The catalytic sites are hosted primarily by the beta subunits. The protein is ATP synthase subunit beta, chloroplastic of Asarum canadense (Wild ginger).